Here is a 480-residue protein sequence, read N- to C-terminus: Ciliated left-right organizer protein containing ZP-N domains homolog (480 aa).

Residues 1–23 (MKNQHNTFWVLCLLFVMFDETFS) form the signal peptide.

Expressed specifically by cells of the ciliated left-right organizer.

The protein localises to the secreted. This Xenopus tropicalis (Western clawed frog) protein is Ciliated left-right organizer protein containing ZP-N domains homolog.